A 115-amino-acid polypeptide reads, in one-letter code: Migration and invasion enhancer 1 (115 aa).

A compositionally biased stretch (polar residues) spans 1 to 10 (MSGDTGTTSV). The segment at 1-22 (MSGDTGTTSVAPPPGETEPGHG) is disordered. Ser-2 carries the N-acetylserine modification. Cys-30 and Cys-33 are joined by a disulfide. Cys-112 carries S-geranylgeranyl cysteine lipidation. The propeptide at 113 to 115 (VIL) is removed in mature form.

The protein belongs to the SelWTH family. In terms of assembly, interacts with GPX1. In terms of processing, isoprenylation facilitates association with the plasma membrane and enhances the migratory phenotype of cells by inducing increased filopodia formation.

Its subcellular location is the cytoplasm. It localises to the cytosol. It is found in the cell membrane. Its function is as follows. Increases cell migration by inducing filopodia formation at the leading edge of migrating cells. Plays a role in regulation of apoptosis, possibly through control of CASP3. May be involved in a redox-related process. The chain is Migration and invasion enhancer 1 (MIEN1) from Bos taurus (Bovine).